Reading from the N-terminus, the 310-residue chain is Olfactory receptor 2A25 (310 aa).

Over 1–24 (MGGNQTSITEFLLLGFPIGPRIQM) the chain is Extracellular. Residue asparagine 4 is glycosylated (N-linked (GlcNAc...) asparagine). A helical transmembrane segment spans residues 25–48 (LLFGLFSLFYIFILLGNGTILGLI). Topologically, residues 49-56 (SLDSRLHT) are cytoplasmic. A helical membrane pass occupies residues 57–78 (PMYFFLSHLAVVDIACACSTVP). The Extracellular segment spans residues 79–99 (QMLVNLLHPAKPISFAGCMTQ). Cysteine 96 and cysteine 188 are disulfide-bonded. A helical membrane pass occupies residues 100–119 (MFLFLSFAHTECLLLVVMSY). The Cytoplasmic portion of the chain corresponds to 120-138 (DRYVAICHPLRYSTIMTWK). Residues 139–157 (VCITLALTSWILGVLLALV) traverse the membrane as a helical segment. The Extracellular portion of the chain corresponds to 158–195 (HLVLLLPLSFCGPQKLNHFFCEIMAVLKLACADTHINE). The helical transmembrane segment at 196 to 218 (VMVLAGAVSVLVGAFFSTVISYV) threads the bilayer. Residues 219-235 (HILCAILKIQSGEGCQK) lie on the Cytoplasmic side of the membrane. Residues 236–258 (AFSICSSHLCVVGLFYGTAIIMY) traverse the membrane as a helical segment. Over 259–271 (VEPQYESPKEQKK) the chain is Extracellular. The helical transmembrane segment at 272-291 (YLLLFHSLFNPMLNPLIYSL) threads the bilayer. Residues 292–310 (RNKEVQGTLKRMLEKKRTS) are Cytoplasmic-facing.

The protein belongs to the G-protein coupled receptor 1 family.

The protein localises to the cell membrane. In terms of biological role, odorant receptor. In Homo sapiens (Human), this protein is Olfactory receptor 2A25 (OR2A25).